Reading from the N-terminus, the 253-residue chain is Triosephosphate isomerase (253 aa).

N9 to K11 contributes to the substrate binding site. H97 serves as the catalytic Electrophile. E169 (proton acceptor) is an active-site residue. Substrate contacts are provided by residues G175, S215, and G236–G237.

Belongs to the triosephosphate isomerase family. In terms of assembly, homodimer.

It localises to the cytoplasm. The catalysed reaction is D-glyceraldehyde 3-phosphate = dihydroxyacetone phosphate. The protein operates within carbohydrate biosynthesis; gluconeogenesis. Its pathway is carbohydrate degradation; glycolysis; D-glyceraldehyde 3-phosphate from glycerone phosphate: step 1/1. Its function is as follows. Involved in the gluconeogenesis. Catalyzes stereospecifically the conversion of dihydroxyacetone phosphate (DHAP) to D-glyceraldehyde-3-phosphate (G3P). This chain is Triosephosphate isomerase, found in Staphylococcus saprophyticus subsp. saprophyticus (strain ATCC 15305 / DSM 20229 / NCIMB 8711 / NCTC 7292 / S-41).